We begin with the raw amino-acid sequence, 733 residues long: Methionine--tRNA ligase (733 aa).

Residues 11–21 (PYANGPIHAGH) carry the 'HIGH' region motif. Residues C143, C146, C156, and C159 each contribute to the Zn(2+) site. The short motif at 345-349 (KFSTS) is the 'KMSKS' region element. Position 348 (T348) interacts with ATP. The tRNA-binding domain occupies 633–733 (DFMKLDLRVG…KEVKLGARIR (101 aa)).

Belongs to the class-I aminoacyl-tRNA synthetase family. MetG type 1 subfamily. In terms of assembly, homodimer. It depends on Zn(2+) as a cofactor.

It localises to the cytoplasm. It catalyses the reaction tRNA(Met) + L-methionine + ATP = L-methionyl-tRNA(Met) + AMP + diphosphate. Its function is as follows. Is required not only for elongation of protein synthesis but also for the initiation of all mRNA translation through initiator tRNA(fMet) aminoacylation. The polypeptide is Methionine--tRNA ligase (Thermococcus onnurineus (strain NA1)).